Here is a 4749-residue protein sequence, read N- to C-terminus: E3 ubiquitin-protein ligase MYCBP2 (4749 aa).

3 disordered regions span residues 87 to 127, 170 to 192, and 609 to 628; these read DRDQ…RSKS, AASKNSVQSGESDSDEEEESREP, and ASKGEDGESTKSRRQSKPYK. The span at 100–124 shows a compositional bias: basic residues; that stretch reads SRNKKILNKKKLKRKQKSKSKVKTR. Phosphoserine occurs at positions 127, 178, 181, and 183. RCC1 repeat units lie at residues 600 to 655, 699 to 755, 907 to 957, 958 to 1009, and 1011 to 1066; these read DGSV…VISK, NGEV…MMCP, KRDK…VLME, NGDV…LLMD, and QVFT…LRID. The segment covering 899–910 has biased composition (basic residues); the sequence is SHPAQLKHKRDK. Residues 899–928 are disordered; that stretch reads SHPAQLKHKRDKHKDGSGDRGEKDASKITT. The span at 911 to 924 shows a compositional bias: basic and acidic residues; it reads HKDGSGDRGEKDAS. Residues 1235-1386 are PHR domain 1; that stretch reads NRFESHGGGW…GQIPQLLYRL (152 aa). S1621 carries the post-translational modification Phosphoserine. Positions 1723–1881 are PHR domain 2; the sequence is NRFTKTSQGR…GQIPQILYYR (159 aa). A disulfide bond links C1745 and C1860. Residues 2018 to 2544 are RAE1 binding; that stretch reads AVIESEHPYK…FNQHLGKSLL (527 aa). 2 disordered regions span residues 2313–2336 and 2780–3084; these read KKTSLQQDQGKKCQRIPGSPSAAA and QQRQ…KGDG. The stretch at 2331-2438 is one Filamin repeat; it reads SPSAAASSAD…IDAGLEVKVK (108 aa). Residues 2780-2803 are compositionally biased toward polar residues; the sequence is QQRQLQSDRGTISTSSRPVSTSGK. Over residues 2814-2832 the composition is skewed to basic and acidic residues; that stretch reads VKPDGHVSRTPADQKKPRG. Residue S2841 is modified to Phosphoserine. The segment covering 2847-2857 has biased composition (basic and acidic residues); the sequence is DAAKLRSDSHS. Polar residues predominate over residues 2858–2879; that stretch reads RSLSPNHNTLQTLKSDGRTSSG. Residues S2859 and S2861 each carry the phosphoserine modification. 2 stretches are compositionally biased toward low complexity: residues 2884–2894 and 2904–2917; these read SPGPGSRSSSP and SSPSGASSPRSSSP. Phosphoserine occurs at positions 2905 and 2911. Polar residues predominate over residues 2918–2929; that stretch reads QDKNLPQKSTAP. Positions 2932-2943 are enriched in basic and acidic residues; sequence TKLDPPRERSKS. 3 positions are modified to phosphoserine: S2941, S2943, and S2992. Residues 3008–3021 show a composition bias toward polar residues; that stretch reads CTSSTLKTNGVTDS. 2 stretches are compositionally biased toward basic and acidic residues: residues 3027-3037 and 3047-3056; these read GDLKSVDEGSN and PLKDEQEMRA. S3057 carries the phosphoserine modification. Residues 3060–3073 are compositionally biased toward basic residues; it reads ISRKCANRHTRPKK. Phosphoserine occurs at positions 3162, 3550, and 3577. Residues 3677-3700 form a disordered region; the sequence is VEAEEDEDEDNKSNKENAEQEKDT. Basic and acidic residues predominate over residues 3687-3700; that stretch reads NKSNKENAEQEKDT. One can recognise a DOC domain in the interval 3789-3967; sequence FSISVQSGFE…SVAQQRSCEA (179 aa). The segment at 3986–4007 is disordered; sequence SGDAEPTPEQEEKALLSSPEGE. At T3992 the chain carries Phosphothreonine. A phosphoserine mark is found at S4002 and S4003. Residues C4499, C4502, C4517, H4519, H4522, C4525, C4546, C4549, C4615, and C4618 each coordinate Zn(2+). An RING-type; atypical zinc finger spans residues 4499–4550; the sequence is CMICFTEALSAAPAIQLDCSHVFHLQCCRRVLENRWLGPRITFGFISCPICK. The tract at residues 4610–4747 is tandem cysteine domain; it reads YAYYVCYKCR…LGCGVCRNAH (138 aa). C4629 is an active-site residue. Residues C4646, C4649, C4658, H4661, C4670, C4673, and C4674 each contribute to the Zn(2+) site. Residue C4681 is part of the active site. 7 residues coordinate Zn(2+): C4688, C4691, C4709, C4723, H4729, C4740, and C4743.

The protein belongs to the RING-Cys relay (RCR) family. In terms of assembly, interacts with MYC. Interacts with TSC2 (tuberin) when TSC2 is in complex with TSC1 (hamartin). Interacts with FBXO45. Interacts with RAE1. Interacts with CPNE1 (via VWFA domain) and CPNE4 (via VWFA domain). Interacts with (sumoylated) RANGAP1; interaction with sumoylated RANGAP1 inhibits E3 ubiquitin-protein ligase activity and promotes MYCBP2 translocation to the nucleus. Interacts with RAN. Interacts with ATP13A2; the interaction inhibits the ubiquitination of TSC2 by MYCBP2. Interacts with USP11. Autoubiquitinated. Expression is mostly restricted to the nervous system, including expression in motor and sensory axons. During postnatal development, expression is particularly strong in the cerebellum, hippocampus and retina. Lower levels of expression are observed throughout the cerebral cortex.

The protein resides in the nucleus. Its subcellular location is the cell projection. The protein localises to the axon. It localises to the cytoplasm. It is found in the cytoskeleton. It carries out the reaction [E2 ubiquitin-conjugating enzyme]-S-ubiquitinyl-L-cysteine + [acceptor protein]-L-threonine = [E2 ubiquitin-conjugating enzyme]-L-cysteine + [acceptor protein]-3-O-ubiquitinyl-L-threonine.. Its pathway is protein modification; protein ubiquitination. Atypical E3 ubiquitin-protein ligase which specifically mediates ubiquitination of threonine and serine residues on target proteins, instead of ubiquitinating lysine residues. Shows esterification activity towards both threonine and serine, with a preference for threonine, and acts via two essential catalytic cysteine residues that relay ubiquitin to its substrate via thioester intermediates. Interacts with the E2 enzymes UBE2D1, UBE2D3, UBE2E1 and UBE2L3. Plays a key role in neural development, probably by mediating ubiquitination of threonine residues on target proteins. Involved in different processes such as regulation of neurite outgrowth, synaptic growth, synaptogenesis and axon degeneration. Required for the formation of major central nervous system axon tracts. Required for proper axon growth by regulating axon navigation and axon branching: acts by regulating the subcellular location and stability of MAP3K12/DLK. Required for proper localization of retinogeniculate projections but not for eye-specific segregation. Regulates axon guidance in the olfactory system. Involved in Wallerian axon degeneration, an evolutionarily conserved process that drives the loss of damaged axons: acts by promoting destabilization of NMNAT2, probably via ubiquitination of NMNAT2. Catalyzes ubiquitination of threonine and/or serine residues on NMNAT2, consequences of threonine and/or serine ubiquitination are however unknown. Regulates the internalization of TRPV1 in peripheral sensory neurons. May mediate ubiquitination and subsequent proteasomal degradation of TSC2/tuberin. Independently of the E3 ubiquitin-protein ligase activity, also acts as a guanosine exchange factor (GEF) for RAN in neurons of dorsal root ganglia. May function as a facilitator or regulator of transcriptional activation by MYC. Acts in concert with HUWE1 to regulate the circadian clock gene expression by promoting the lithium-induced ubiquination and degradation of NR1D1. This is E3 ubiquitin-protein ligase MYCBP2 from Mus musculus (Mouse).